Reading from the N-terminus, the 782-residue chain is Ribosome biogenesis protein ERB1 (782 aa).

Disordered regions lie at residues M1–K123 and P339–E361. A compositionally biased stretch (acidic residues) spans S35–E86. Basic and acidic residues predominate over residues V105–K123. WD repeat units lie at residues G433–S472, N476–A516, T567–P609, K612–V650, P653–K692, F696–E736, and V752–M782.

It belongs to the WD repeat BOP1/ERB1 family. In terms of assembly, component of the NOP7 complex, composed of ERB1, NOP7 and YTM1. The complex is held together by ERB1, which interacts with NOP7 via its N-terminal domain and with YTM1 via a high-affinity interaction between the seven-bladed beta-propeller domains of the 2 proteins. The NOP7 complex associates with the 66S pre-ribosome.

The protein resides in the nucleus. The protein localises to the nucleolus. It localises to the nucleoplasm. Functionally, component of the NOP7 complex, which is required for maturation of the 25S and 5.8S ribosomal RNAs and formation of the 60S ribosome. In Chaetomium globosum (strain ATCC 6205 / CBS 148.51 / DSM 1962 / NBRC 6347 / NRRL 1970) (Soil fungus), this protein is Ribosome biogenesis protein ERB1.